The primary structure comprises 510 residues: UDP-N-acetylmuramoylalanine--D-glutamate ligase (510 aa).

ATP is bound at residue G138–T144. The tract at residues F294 to R316 is disordered.

Belongs to the MurCDEF family.

It is found in the cytoplasm. It carries out the reaction UDP-N-acetyl-alpha-D-muramoyl-L-alanine + D-glutamate + ATP = UDP-N-acetyl-alpha-D-muramoyl-L-alanyl-D-glutamate + ADP + phosphate + H(+). The protein operates within cell wall biogenesis; peptidoglycan biosynthesis. Cell wall formation. Catalyzes the addition of glutamate to the nucleotide precursor UDP-N-acetylmuramoyl-L-alanine (UMA). The chain is UDP-N-acetylmuramoylalanine--D-glutamate ligase from Bordetella bronchiseptica (strain ATCC BAA-588 / NCTC 13252 / RB50) (Alcaligenes bronchisepticus).